The sequence spans 477 residues: MDLVTRRIRGALGIAGPLLFLEGVPRARLGEVVRIRGEPEANGRAAEERSGQVIALSRDRIAVQVLEETRGLAPARAEVTLTGQVARLGVSRGMLGRVLDGLGRPADGLPPPVPEARPAIHGAALNVTRREKPSDFIETGVSAIDGMNTLVRGQKLPVFSCAGLPASRLAAQIVCQARVRGGEAFAVVFAAMGSPFREYHAFLEAFRAAGVLARTVVFLNRAEDPPIERLMTPRCALTCAEHLAFVHGLHVLVVLTDVTSYCEALREVALAREEVPGRRGYPGYMYTDLATIFERAGRVRGRPGSLTQLPVLTMPDDDLTHPIPDLTGYITEGQIVLSRDLDRRGVYPPIDVLPSLSRLMGLGAGPGKTRDDHRPVADQLYAFYARGRDVRRMAAIVGAASLGEEEKRLLAFADAFEDELVGQGGTFRTIEDTLEAGWRLLSGFPPAALTRIPERLLRARSARPAAGAAAVSGGAVA.

It belongs to the ATPase alpha/beta chains family.

Produces ATP from ADP in the presence of a proton gradient across the membrane. The V-type beta chain is a regulatory subunit. The sequence is that of V-type ATP synthase beta chain from Anaeromyxobacter dehalogenans (strain 2CP-1 / ATCC BAA-258).